The following is a 255-amino-acid chain: ATP synthase subunit a 2 (255 aa).

The next 5 membrane-spanning stretches (helical) occupy residues S26–F46, L86–L106, D131–L151, M205–W225, and I230–M250.

It belongs to the ATPase A chain family. In terms of assembly, F-type ATPases have 2 components, CF(1) - the catalytic core - and CF(0) - the membrane proton channel. CF(1) has five subunits: alpha(3), beta(3), gamma(1), delta(1), epsilon(1). CF(0) has three main subunits: a(1), b(2) and c(9-12). The alpha and beta chains form an alternating ring which encloses part of the gamma chain. CF(1) is attached to CF(0) by a central stalk formed by the gamma and epsilon chains, while a peripheral stalk is formed by the delta and b chains.

It is found in the cell inner membrane. In terms of biological role, key component of the proton channel; it plays a direct role in the translocation of protons across the membrane. In Photobacterium profundum (strain SS9), this protein is ATP synthase subunit a 2.